The following is a 266-amino-acid chain: Ubiquinone biosynthesis protein COQ4 homolog, mitochondrial (266 aa).

Residues His169, Asp170, His173, and Glu185 each contribute to the Zn(2+) site.

Belongs to the COQ4 family. In terms of assembly, component of a multi-subunit COQ enzyme complex. The cofactor is Zn(2+).

It localises to the mitochondrion inner membrane. The catalysed reaction is a 4-hydroxy-3-methoxy-5-(all-trans-polyprenyl)benzoate + H(+) = a 2-methoxy-6-(all-trans-polyprenyl)phenol + CO2. It participates in cofactor biosynthesis; ubiquinone biosynthesis. Its function is as follows. Lyase that catalyzes the C1-decarboxylation of 4-hydroxy-3-methoxy-5-(all-trans-polyprenyl)benzoic acid into 2-methoxy-6-(all-trans-polyprenyl)phenol during ubiquinone biosynthesis. The sequence is that of Ubiquinone biosynthesis protein COQ4 homolog, mitochondrial from Drosophila ananassae (Fruit fly).